The sequence spans 626 residues: Basic helix-loop-helix ARNT-like protein 1 (626 aa).

The segment at 1–60 (MADQRMDISSTISDFMSPGPTDLLSSSLGTSGVDCNRKRKGSSTDYQESMDTDKDDPHGR) is disordered. The residue at position 17 (serine 17) is a Phosphoserine; by GSK3-beta. Low complexity predominate over residues 17–32 (SPGPTDLLSSSLGTSG). Threonine 21 carries the phosphothreonine; by GSK3-beta modification. The Nuclear localization signal signature appears at 36-41 (NRKRKG). Residues 51 to 60 (DTDKDDPHGR) show a composition bias toward basic and acidic residues. The 54-residue stretch at 72-125 (NAREAHSQIEKRRRDKMNSFIDELASLVPTCNAMSRKLDKLTVLRMAVQHMKTL) folds into the bHLH domain. Serine 78 bears the Phosphoserine mark. Serine 90 bears the Phosphoserine; by CK2 mark. The Nuclear export signal 1 signature appears at 142–152 (LSDDELKHLIL). One can recognise a PAS 1 domain in the interval 143 to 215 (SDDELKHLIL…EQLSSSDTAP (73 aa)). Lysine 252 is covalently cross-linked (Glycyl lysine isopeptide (Lys-Gly) (interchain with G-Cter in SUMO2 and SUMO3)). Lysine 259 participates in a covalent cross-link: Glycyl lysine isopeptide (Lys-Gly) (interchain with G-Cter in SUMO2). The PAS 2 domain maps to 326-396 (PQPVNGEIRV…ECHRQVLQTR (71 aa)). The Nuclear export signal 2 motif lies at 361-369 (LAYLPQELL). One can recognise a PAC domain in the interval 401–444 (TNCYKFKIKDGSFITLRSRWFSFMNPWTKEVEYIVSTNTVVLAN). Disordered regions lie at residues 458-493 (ASPHSMDSMLPSGEGGPKRTHPTVPGIPGGTRAGAG) and 511-595 (GSSP…SPSN). Over residues 484–493 (IPGGTRAGAG) the composition is skewed to gly residues. The interaction with CIART stretch occupies residues 508 to 588 (RIRGSSPSSC…IGIDMIDNDQ (81 aa)). Residues 511–521 (GSSPSSCGSSP) are compositionally biased toward low complexity. Lysine 538 bears the N6-acetyllysine mark.

As to quaternary structure, component of the circadian clock oscillator which includes the CRY1/2 proteins, CLOCK or NPAS2,BMAL1 or BMAL2, CSNK1D and/or CSNK1E, TIMELESS and the PER1/2/3 proteins. Forms a heterodimer with CLOCK. The CLOCK-BMAL1 heterodimer is required for E-box-dependent transactivation, for CLOCK nuclear translocation and degradation, and, for phosphorylation of both CLOCK and BMAL1. Part of a nuclear complex which also includes RACK1 and PRKCA; RACK1 and PRKCA are recruited to the complex in a circadian manner. Interacts with NPAS2. Interacts with EZH2. Interacts with SUMO3. Interacts with SIRT1. Interacts with AHR. Interacts with ID1, ID2 and ID3. Interacts with DDX4. Interacts with OGT. Interacts with EED and SUZ12. Interacts with MTA1. Interacts with CIART. Interacts with HSP90. Interacts with KAT2B and EP300. Interacts with BHLHE40/DEC1 and BHLHE41/DEC2. Interacts with RELB and the interaction is enhanced in the presence of CLOCK. Interacts with PER1, PER2, CRY1 and CRY2 and this interaction requires a translocation to the nucleus. Interaction of the CLOCK-BMAL1 heterodimer with PER or CRY inhibits transcription activation. Interaction of the CLOCK-BMAL1 with CRY1 is independent of DNA but with PER2 is off DNA. The CLOCK-BMAL1 heterodimer interacts with GSK3B. Interacts with KDM5A. Interacts with KMT2A; in a circadian manner. Interacts with UBE3A. Interacts with PRKCG. Interacts with MAGEL2. Interacts with NCOA2. Interacts with THRAP3. The CLOCK-BMAL1 heterodimer interacts with PASD1. Interacts with PASD1. Interacts with USP9X. Interacts with PIWIL2 (via PIWI domain). Interacts with HDAC3. Interacts with HNF4A. Post-translationally, ubiquitinated, leading to its proteasomal degradation. Deubiquitinated by USP9X. O-glycosylated; contains O-GlcNAc. O-glycosylation by OGT prevents protein degradation by inhibiting ubiquitination. It also stabilizes the CLOCK-BMAL1 heterodimer thereby increasing CLOCK-BMAL1-mediated transcription of genes in the negative loop of the circadian clock such as PER1/2/3 and CRY1/2. In terms of processing, acetylated on Lys-538 by CLOCK during the repression phase of the circadian cycle. Acetylation facilitates recruitment of CRY1 protein and initiates the repression phase of the circadian cycle. Acetylated at Lys-538 by KAT5 during the activation phase of the cycle, leading to recruitment of the positive transcription elongation factor b (P-TEFb) and BRD4, followed by productive elongation of circadian transcripts. Deacetylated by SIRT1, which may result in decreased protein stability. Post-translationally, phosphorylated upon dimerization with CLOCK. Phosphorylation enhances the transcriptional activity, alters the subcellular localization and decreases the stability of the CLOCK-BMAL1 heterodimer by promoting its degradation. Phosphorylation shows circadian variations in the liver with a peak between CT10 to CT14. Phosphorylation at Ser-90 by CK2 is essential for its nuclear localization, its interaction with CLOCK and controls CLOCK nuclear entry. Dephosphorylation at Ser-78 is important for dimerization with CLOCK and transcriptional activity. Sumoylated on Lys-259 upon dimerization with CLOCK. Predominantly conjugated to poly-SUMO2/3 rather than SUMO1 and the level of these conjugates undergo rhythmic variation, peaking at CT9-CT12. Sumoylation localizes it exclusively to the PML body and promotes its ubiquitination in the PML body, ubiquitin-dependent proteasomal degradation and the transcriptional activity of the CLOCK-BMAL1 heterodimer. In terms of processing, undergoes lysosome-mediated degradation in a time-dependent manner in the liver. In terms of tissue distribution, hair follicles (at protein level). Highly expressed in the adult brain, skeletal muscle and heart.

It is found in the nucleus. It localises to the cytoplasm. Its subcellular location is the PML body. Its activity is regulated as follows. There is conflicting data about the effect of NAD cofactors on activity. PubMed:11441146 suggests that the redox state of the cell can modulate the transcriptional activity of the CLOCK-BMAL1 heterodimer; NADH and NADPH enhance the DNA-binding activity of the heterodimer. PubMed:23229515 reports that NADH and NADPH have no significant effect on DNA-binding activity of the CLOCK-BMAL1 heterodimer. Functionally, transcriptional activator which forms a core component of the circadian clock. The circadian clock, an internal time-keeping system, regulates various physiological processes through the generation of approximately 24 hour circadian rhythms in gene expression, which are translated into rhythms in metabolism and behavior. It is derived from the Latin roots 'circa' (about) and 'diem' (day) and acts as an important regulator of a wide array of physiological functions including metabolism, sleep, body temperature, blood pressure, endocrine, immune, cardiovascular, and renal function. Consists of two major components: the central clock, residing in the suprachiasmatic nucleus (SCN) of the brain, and the peripheral clocks that are present in nearly every tissue and organ system. Both the central and peripheral clocks can be reset by environmental cues, also known as Zeitgebers (German for 'timegivers'). The predominant Zeitgeber for the central clock is light, which is sensed by retina and signals directly to the SCN. The central clock entrains the peripheral clocks through neuronal and hormonal signals, body temperature and feeding-related cues, aligning all clocks with the external light/dark cycle. Circadian rhythms allow an organism to achieve temporal homeostasis with its environment at the molecular level by regulating gene expression to create a peak of protein expression once every 24 hours to control when a particular physiological process is most active with respect to the solar day. Transcription and translation of core clock components (CLOCK, NPAS2, BMAL1, BMAL2, PER1, PER2, PER3, CRY1 and CRY2) plays a critical role in rhythm generation, whereas delays imposed by post-translational modifications (PTMs) are important for determining the period (tau) of the rhythms (tau refers to the period of a rhythm and is the length, in time, of one complete cycle). A diurnal rhythm is synchronized with the day/night cycle, while the ultradian and infradian rhythms have a period shorter and longer than 24 hours, respectively. Disruptions in the circadian rhythms contribute to the pathology of cardiovascular diseases, cancer, metabolic syndromes and aging. A transcription/translation feedback loop (TTFL) forms the core of the molecular circadian clock mechanism. Transcription factors, CLOCK or NPAS2 and BMAL1 or BMAL2, form the positive limb of the feedback loop, act in the form of a heterodimer and activate the transcription of core clock genes and clock-controlled genes (involved in key metabolic processes), harboring E-box elements (5'-CACGTG-3') within their promoters. The core clock genes: PER1/2/3 and CRY1/2 which are transcriptional repressors form the negative limb of the feedback loop and interact with the CLOCK|NPAS2-BMAL1|BMAL2 heterodimer inhibiting its activity and thereby negatively regulating their own expression. This heterodimer also activates nuclear receptors NR1D1/2 and RORA/B/G, which form a second feedback loop and which activate and repress BMAL1 transcription, respectively. BMAL1 positively regulates myogenesis and negatively regulates adipogenesis via the transcriptional control of the genes of the canonical Wnt signaling pathway. Plays a role in normal pancreatic beta-cell function; regulates glucose-stimulated insulin secretion via the regulation of antioxidant genes NFE2L2/NRF2 and its targets SESN2, PRDX3, CCLC and CCLM. Negatively regulates the mTORC1 signaling pathway; regulates the expression of MTOR and DEPTOR. Controls diurnal oscillations of Ly6C inflammatory monocytes; rhythmic recruitment of the PRC2 complex imparts diurnal variation to chemokine expression that is necessary to sustain Ly6C monocyte rhythms. Regulates the expression of HSD3B2, STAR, PTGS2, CYP11A1, CYP19A1 and LHCGR in the ovary and also the genes involved in hair growth. Plays an important role in adult hippocampal neurogenesis by regulating the timely entry of neural stem/progenitor cells (NSPCs) into the cell cycle and the number of cell divisions that take place prior to cell-cycle exit. Regulates the circadian expression of CIART and KLF11. The CLOCK-BMAL1 heterodimer regulates the circadian expression of SERPINE1/PAI1, VWF, B3, CCRN4L/NOC, NAMPT, DBP, MYOD1, PPARGC1A, PPARGC1B, SIRT1, GYS2, F7, NGFR, GNRHR, BHLHE40/DEC1, ATF4, MTA1, KLF10 and also genes implicated in glucose and lipid metabolism. Promotes rhythmic chromatin opening, regulating the DNA accessibility of other transcription factors. The NPAS2-BMAL1 heterodimer positively regulates the expression of MAOA, F7 and LDHA and modulates the circadian rhythm of daytime contrast sensitivity by regulating the rhythmic expression of adenylate cyclase type 1 (ADCY1) in the retina. The preferred binding motif for the CLOCK-BMAL1 heterodimer is 5'-CACGTGA-3', which contains a flanking adenine nucleotide at the 3-prime end of the canonical 6-nucleotide E-box sequence. CLOCK specifically binds to the half-site 5'-CAC-3', while BMAL1 binds to the half-site 5'-GTGA-3'. The CLOCK-BMAL1 heterodimer also recognizes the non-canonical E-box motifs 5'-AACGTGA-3' and 5'-CATGTGA-3'. Essential for the rhythmic interaction of CLOCK with ASS1 and plays a critical role in positively regulating CLOCK-mediated acetylation of ASS1. Plays a role in protecting against lethal sepsis by limiting the expression of immune checkpoint protein CD274 in macrophages in a PKM2-dependent manner. Regulates the diurnal rhythms of skeletal muscle metabolism via transcriptional activation of genes promoting triglyceride synthesis (DGAT2) and metabolic efficiency (COQ10B). Its function is as follows. (Microbial infection) Regulates SARS coronavirus-2/SARS-CoV-2 entry and replication in lung epithelial cells probably through the post-transcriptional regulation of ACE2 and interferon-stimulated gene expression. This Homo sapiens (Human) protein is Basic helix-loop-helix ARNT-like protein 1.